The primary structure comprises 112 residues: Signal peptidase complex-like protein DTM1 (112 aa).

The N-terminal stretch at 1–25 (MGRDEMLRRSLVALAAAVVVTGVVT) is a signal peptide. A run of 2 helical transmembrane segments spans residues 33–53 (ATYG…WEFF) and 92–112 (MAML…YVSS).

Belongs to the SPCS1 family.

The protein resides in the endoplasmic reticulum membrane. In terms of biological role, functions in tapetum development during early meiosis. May play a role in the endoplasmic reticulum (ER) membrane in the early stages of tapetum development in anthers. Seems to function after MSP1 and before UDT1. This is Signal peptidase complex-like protein DTM1 from Oryza sativa subsp. japonica (Rice).